Consider the following 345-residue polypeptide: MSNTQLSYKDAGVDIHAGNELVERIKGDVKRTRRPEVMGGLGGFGALCALPTKYKEPILVSGTDGVGTKLRLAIDLNKHDTIGQDLVAMCVNDLVVQGAEPLFFLDYYATGKLEVDVAADVIKGIADGCEISGCALVGGETAEMPGMYHEGDYDLAGFCVGVVEKSEIIDGSAVKAGDVLLALASSGPHSNGYSLIRKVIEVSGANPATDTLEGKPLSEHLLAPTKIYVKSVLQLIKQADVHAIAHLTGGGFWENIPRVLPATAKAVIDEKSWEWPAAFKWLQEKGNISRYEMYRTFNCGVGMVIALPEKDIETALAVLKQAGENAWVIGKIENLGEGSEQVEII.

This sequence belongs to the AIR synthase family.

Its subcellular location is the cytoplasm. It carries out the reaction 2-formamido-N(1)-(5-O-phospho-beta-D-ribosyl)acetamidine + ATP = 5-amino-1-(5-phospho-beta-D-ribosyl)imidazole + ADP + phosphate + H(+). It functions in the pathway purine metabolism; IMP biosynthesis via de novo pathway; 5-amino-1-(5-phospho-D-ribosyl)imidazole from N(2)-formyl-N(1)-(5-phospho-D-ribosyl)glycinamide: step 2/2. This Actinobacillus pleuropneumoniae serotype 5b (strain L20) protein is Phosphoribosylformylglycinamidine cyclo-ligase.